The sequence spans 434 residues: Maltoporin (434 aa).

The N-terminal stretch at 1-25 (MKMKAKWLPIAAAVTAALASQAAFA) is a signal peptide.

The protein belongs to the porin LamB (TC 1.B.3) family. Homotrimer formed of three 18-stranded antiparallel beta-barrels, containing three independent channels.

It localises to the cell outer membrane. The enzyme catalyses beta-maltose(in) = beta-maltose(out). Functionally, involved in the transport of maltose and maltodextrins. This Aeromonas hydrophila protein is Maltoporin.